A 642-amino-acid chain; its full sequence is MDQKTTGLRENYGHRRQPALGKAMPVTALLLNLESNPLDYSRNDIGAELLEDDDKPPQLFSVTDEPPSPNEEDYKPPNHHEDDGKLAGERHREIPCSNCLKTAPGHLIDRQSAINEMCQRLCGPECRRPQGLTLDGVRQDFLRQYEIAEAVAKTSAMTSTVQMKQRLAARKLEFEKEMEMDEQLGVASPRNDINLGQSSTVAATGMGEFEFEPPRDLLLYLVRMGSFNSAPKINNVDSQDDGLVLPSGLSTPALLQHVQQLRGGGIEQPSLLTRGFLKPLLADEDVADGLRCLKLNSVSRVCSAPVEGDDIRLLQWNILSQTLGQHNDGFVRCPEEALTWEHRKYLIVQEILQNQPDVICLQEVDHFKFLQTVLGSQNYAGIFFPKPDSPCLYIEQNNGPDGCAIFYKRDKLQLQGYDTRILEVWRVQSNQVAIAARLRMRSSGREFCVATTHLKARHGALLAKLRNEQGRDLIRFVKQFAGDTPLLLCGDFNAEPVEPIYATILGCDLLRLGSAYADVKLDREEILHPNADVGEFVAKSMKREPPYTTWKIREEGEECHTIDYVFYTPDRLKIKNCLDFPAGEQIGKNRTPSFQYPSDHFSLVCDFELLPPTENGKESGSGSGSDGENETEVEGSKHGSIQ.

Positions 50-87 (LEDDDKPPQLFSVTDEPPSPNEEDYKPPNHHEDDGKLA) are disordered. A compositionally biased stretch (basic and acidic residues) spans 72–87 (EDYKPPNHHEDDGKLA). E363 contributes to the Mg(2+) binding site. Substrate-binding positions include E363, N430, 453 to 456 (HLKA), 491 to 493 (DFN), and H600. The segment at 611 to 642 (PPTENGKESGSGSGSDGENETEVEGSKHGSIQ) is disordered.

Belongs to the CCR4/nocturin family. As to quaternary structure, associates to the CCR4-NOT complex composed of at least Pop2/Caf1-55, Ccr4, Not1, Rga/Not2, and Not3. Mg(2+) is required as a cofactor. Expressed in the head, in the dorsal neurons DN3, a subgroup of clock neurons (at protein level). Ubiquitously expressed in both males and females.

It localises to the cytoplasm. The enzyme catalyses NADP(+) + H2O = phosphate + NAD(+). It carries out the reaction NADPH + H2O = phosphate + NADH. In terms of biological role, phosphatase which catalyzes the conversion of NADP(+) to NAD(+) and of NADPH to NADH. Shows a small preference for NADPH over NADP(+). Because of its association with the CCR4-NOT complex, has a role in mRNA deadenylation and decay. Required at the pupal stage for proper wing morphogenesis after eclosion. Doesn't have a role in light-mediated behavioral response. Its function is as follows. In dorsal neurons, contributes to the light-mediated behavioral response. This chain is Nocturnin, found in Drosophila melanogaster (Fruit fly).